A 416-amino-acid polypeptide reads, in one-letter code: Phosphoglycerate kinase (416 aa).

Substrate-binding positions include 24-26 (DLN), arginine 40, 63-66 (HLGR), arginine 126, and arginine 166. Residues lysine 216, glycine 304, glutamate 335, and 364 to 367 (GGDS) each bind ATP.

It belongs to the phosphoglycerate kinase family. Monomer.

The protein localises to the cytoplasm. The enzyme catalyses (2R)-3-phosphoglycerate + ATP = (2R)-3-phospho-glyceroyl phosphate + ADP. The protein operates within carbohydrate degradation; glycolysis; pyruvate from D-glyceraldehyde 3-phosphate: step 2/5. This is Phosphoglycerate kinase from Mycobacterium leprae (strain Br4923).